The chain runs to 301 residues: NAD kinase (301 aa).

Residue aspartate 73 is the Proton acceptor of the active site. Residues 73-74, 160-161, arginine 188, aspartate 190, alanine 198, 201-206, alanine 225, and glutamine 257 contribute to the NAD(+) site; these read DG, NE, and TAYNIS.

This sequence belongs to the NAD kinase family. A divalent metal cation serves as cofactor.

The protein resides in the cytoplasm. The catalysed reaction is NAD(+) + ATP = ADP + NADP(+) + H(+). Its function is as follows. Involved in the regulation of the intracellular balance of NAD and NADP, and is a key enzyme in the biosynthesis of NADP. Catalyzes specifically the phosphorylation on 2'-hydroxyl of the adenosine moiety of NAD to yield NADP. This Helicobacter hepaticus (strain ATCC 51449 / 3B1) protein is NAD kinase.